A 158-amino-acid chain; its full sequence is Peroxidase (158 aa).

Residue Pro2 coordinates substrate. His32 provides a ligand contact to heme b. Position 33 (Thr33) interacts with Ca(2+). Cys39 and Cys64 are oxidised to a cystine. Residue Asn48 is glycosylated (N-linked (GlcNAc...) asparagine). Residues Asp78, Thr81, and Asp86 each coordinate Ca(2+).

Belongs to the peroxidase family. Classical plant (class III) peroxidase subfamily. The cofactor is Ca(2+). Heme b serves as cofactor.

The enzyme catalyses 2 a phenolic donor + H2O2 = 2 a phenolic radical donor + 2 H2O. In terms of biological role, removal of H(2)O(2), oxidation of toxic reductants, biosynthesis and degradation of lignin, suberization, auxin catabolism, response to environmental stresses such as wounding, pathogen attack and oxidative stress. These functions might be dependent on each isozyme/isoform in each plant tissue. This chain is Peroxidase, found in Lupinus polyphyllus (Large-leaved lupine).